The sequence spans 365 residues: Isopentenyl-diphosphate delta-isomerase (365 aa).

4 to 5 contacts substrate; it reads RK. Residues 62–64, S92, and N121 contribute to the FMN site; that span reads GMT. Substrate is bound at residue 92–94; that stretch reads SQR. Q155 contributes to the substrate binding site. E156 is a Mg(2+) binding site. Residues K187, T216, 267 to 269, and 288 to 289 contribute to the FMN site; these read GVR and AL.

The protein belongs to the IPP isomerase type 2 family. In terms of assembly, homooctamer. Dimer of tetramers. Requires FMN as cofactor. The cofactor is NADPH. Mg(2+) serves as cofactor.

The protein localises to the cytoplasm. The catalysed reaction is isopentenyl diphosphate = dimethylallyl diphosphate. Involved in the biosynthesis of isoprenoids. Catalyzes the 1,3-allylic rearrangement of the homoallylic substrate isopentenyl (IPP) to its allylic isomer, dimethylallyl diphosphate (DMAPP). This chain is Isopentenyl-diphosphate delta-isomerase, found in Methanopyrus kandleri (strain AV19 / DSM 6324 / JCM 9639 / NBRC 100938).